The following is a 32-amino-acid chain: Fibrinolytic enzyme (32 aa).

Post-translationally, the N-terminus is blocked.

With respect to regulation, inhibited by phenylmethanesulfonyl fluoride (PMSF). Not inhibited by EDTA, EGTA, beta-mercaptoethanol, indoacetamide, benzamidine, aprotinin, pepstatin A and trypsin inhibitor. Plasmin-like serine protease. Has fibrinolytic and fibrinogenolytic but not plasminogenolytic activity. Cleaves after Arg and Lys residues. The sequence is that of Fibrinolytic enzyme from Hediste japonica (Polychaete worm).